A 118-amino-acid chain; its full sequence is UPF0382 membrane protein C1782.12c (118 aa).

A signal peptide spans 1–18; that stretch reads MTIWNVAALTGLLSVGLG. The Lumenal segment spans residues 19-40; sequence AYGSHGLQKRVQDPHLLKSWST. Residues 41 to 61 traverse the membrane as a helical segment; the sequence is ACTYLMFHSLATMAVSLHPVY. Over 62-67 the chain is Cytoplasmic; it reads GKSRWT. The chain crosses the membrane as a helical span at residues 68-88; it reads GPLLITGSCLFSGTIYGLCLL. The Lumenal segment spans residues 89–96; sequence PKGHSLRR. A helical transmembrane segment spans residues 97–117; sequence ILGPLTPIGGLVMLTGWATML. Val118 is a topological domain (cytoplasmic).

Belongs to the UPF0382 family.

The protein localises to the endoplasmic reticulum membrane. In Schizosaccharomyces pombe (strain 972 / ATCC 24843) (Fission yeast), this protein is UPF0382 membrane protein C1782.12c.